Consider the following 179-residue polypeptide: Large ribosomal subunit protein uL6 (179 aa).

The protein belongs to the universal ribosomal protein uL6 family. In terms of assembly, part of the 50S ribosomal subunit.

In terms of biological role, this protein binds to the 23S rRNA, and is important in its secondary structure. It is located near the subunit interface in the base of the L7/L12 stalk, and near the tRNA binding site of the peptidyltransferase center. This is Large ribosomal subunit protein uL6 from Geotalea uraniireducens (strain Rf4) (Geobacter uraniireducens).